Reading from the N-terminus, the 364-residue chain is Cobalt-precorrin-5B C(1)-methyltransferase (364 aa).

The protein belongs to the CbiD family.

The catalysed reaction is Co-precorrin-5B + S-adenosyl-L-methionine = Co-precorrin-6A + S-adenosyl-L-homocysteine. The protein operates within cofactor biosynthesis; adenosylcobalamin biosynthesis; cob(II)yrinate a,c-diamide from sirohydrochlorin (anaerobic route): step 6/10. Catalyzes the methylation of C-1 in cobalt-precorrin-5B to form cobalt-precorrin-6A. In Pseudomonas putida (strain GB-1), this protein is Cobalt-precorrin-5B C(1)-methyltransferase.